The following is a 207-amino-acid chain: Ribosomal RNA small subunit methyltransferase G (207 aa).

Residues glycine 73, leucine 78, 124–125 (VE), and arginine 139 each bind S-adenosyl-L-methionine.

Belongs to the methyltransferase superfamily. RNA methyltransferase RsmG family.

It is found in the cytoplasm. The catalysed reaction is guanosine(527) in 16S rRNA + S-adenosyl-L-methionine = N(7)-methylguanosine(527) in 16S rRNA + S-adenosyl-L-homocysteine. Specifically methylates the N7 position of guanine in position 527 of 16S rRNA. The sequence is that of Ribosomal RNA small subunit methyltransferase G from Shigella dysenteriae serotype 1 (strain Sd197).